We begin with the raw amino-acid sequence, 308 residues long: Insoluble matrix shell protein 4 (308 aa).

Disordered stretches follow at residues 1-21 (HGNG…GNGY), 47-104 (NTNS…PNAV), and 134-250 (YDSN…NTNS). Over residues 47–99 (NTNSLNGNNNGNSNNNGNGNNNGNSNNNGNGNNNGNTNNGNSYDSNTNDDSNS) the composition is skewed to low complexity.

As to expression, component of the acid-insoluble organic matrix of the calcified shell.

The protein localises to the secreted. The sequence is that of Insoluble matrix shell protein 4 from Ruditapes philippinarum (Japanese carpet shell).